The primary structure comprises 135 residues: MRLLHTMLRVGDLQRSIDFYTKVLGMKLLRTSENPEYKYSLAFVGYGPETEEAVIELTYNWGVDKYELGTAYGHIALSVDNAAEACEKIRQNGGNVTREAGPVKGGTTVIAFVEDPDGYKIELIEEKDAGRGLGN.

Positions 2–126 constitute a VOC domain; it reads RLLHTMLRVG…DGYKIELIEE (125 aa). H5 contributes to the Ni(2+) binding site. Position 9 (R9) interacts with substrate. E56 serves as a coordination point for Ni(2+). Residues N60 and H74 each contribute to the substrate site. Residues H74 and E122 each contribute to the Ni(2+) site. Residue E122 is the Proton donor/acceptor of the active site.

This sequence belongs to the glyoxalase I family. Homodimer. Requires Ni(2+) as cofactor.

It carries out the reaction (R)-S-lactoylglutathione = methylglyoxal + glutathione. It participates in secondary metabolite metabolism; methylglyoxal degradation; (R)-lactate from methylglyoxal: step 1/2. Functionally, catalyzes the conversion of hemimercaptal, formed from methylglyoxal and glutathione, to S-lactoylglutathione. The sequence is that of Lactoylglutathione lyase (gloA) from Escherichia coli O157:H7.